A 92-amino-acid polypeptide reads, in one-letter code: YcgL domain-containing protein Sbal_1869 (92 aa).

Positions 1-85 (MLCAVYKSSR…PQVNLLAEHK (85 aa)) constitute a YcgL domain.

The polypeptide is YcgL domain-containing protein Sbal_1869 (Shewanella baltica (strain OS155 / ATCC BAA-1091)).